A 573-amino-acid polypeptide reads, in one-letter code: Protein FAM200A (573 aa).

The disordered stretch occupies residues 1 to 51 (MTPESRDTTDLSPGGTQEMEGIVIVKVEEEDEEDHFQKERNKVESSPQVLS). Over 1–513 (MTPESRDTTD…DDFPLLSRKS (513 aa)) the chain is Extracellular. Residues 514–533 (ILLLLPFTTTYLCELGFSIL) traverse the membrane as a helical segment. Residues 534-573 (TRLKTKKRNRLNSAPDMRVALSSCVPDWKELMNRQAHPSH) lie on the Cytoplasmic side of the membrane.

It belongs to the FAM200 family.

The protein localises to the membrane. This is Protein FAM200A (FAM200A) from Homo sapiens (Human).